A 257-amino-acid polypeptide reads, in one-letter code: Trans-aconitate 2-methyltransferase (257 aa).

It belongs to the methyltransferase superfamily. Tam family.

Its subcellular location is the cytoplasm. It catalyses the reaction trans-aconitate + S-adenosyl-L-methionine = (E)-3-(methoxycarbonyl)pent-2-enedioate + S-adenosyl-L-homocysteine. Its function is as follows. Catalyzes the S-adenosylmethionine monomethyl esterification of trans-aconitate. This Sinorhizobium medicae (strain WSM419) (Ensifer medicae) protein is Trans-aconitate 2-methyltransferase.